The sequence spans 423 residues: MFPMKDHSALEQHTLSRDELRRRKGYKKGLQLSILLLGEKGSGKSTFLNNLCGQDISLSDGDYDDDDDKVTNNVTPENGNAIEDIDPGYKTAHLSPGLKLVTRRVYLNDELGVPITLDIILFPGCGDNVDNSQSSVVIKNYLDQQFANVLKEEVRIKRNTKETDGRPHVCLYFLKSTPRGVKKFDIELMKTICDKVNLIPIIPKADGLTETELNLHKDIVRQEISQNNIRVFDFKSDTLGETLALYDMDIDSSSAKSKYDNDTKIKEISPFAIVCSKTFNKNSENRVEHIRTYEWGSLVVEDQNTSDFIYLKAILLGSHLQELKDVTNNVLYENYRAKVLTEKKNNYDIPNYSYIDETSRGSVSNVSTRRNSASRTLGNPDTNDENAYQIHKEIDEKNRIIEDYQRKIDLLEKMLAAPHQNKV.

A Septin-type G domain is found at 28-342; the sequence is KGLQLSILLL…ENYRAKVLTE (315 aa). The G1 motif stretch occupies residues 38-45; it reads GEKGSGKS. Residues 38 to 45, Gly-124, 204 to 212, and Arg-291 each bind GTP; these read GEKGSGKS and KADGLTETE. Residues 121–124 form a G3 motif region; the sequence is LFPG. The G4 motif stretch occupies residues 203–206; it reads PKAD. Positions 360-381 are enriched in polar residues; that stretch reads RGSVSNVSTRRNSASRTLGNPD. Residues 360–385 are disordered; that stretch reads RGSVSNVSTRRNSASRTLGNPDTNDE. Positions 384-417 form a coiled coil; sequence DENAYQIHKEIDEKNRIIEDYQRKIDLLEKMLAA.

This sequence belongs to the TRAFAC class TrmE-Era-EngA-EngB-Septin-like GTPase superfamily. Septin GTPase family. As to quaternary structure, interacts with itself. Interacts with CDC11 and SPR3; probably to form a ring at the bud neck.

Its subcellular location is the membrane. It localises to the bud neck. Its function is as follows. Septins are GTPases involved in cytokinesis that assemble into filaments and form a ring at the cleavage site. May act by recruiting MYO1 and HOF1, a protein involved in septation, to the site of cleavage. Septins are also involved in cell morphogenesis, bud site selection, chitin deposition, cell cycle regulation, cell compartmentalization and spore wall formation. The sequence is that of Sporulation-regulated protein 28 (SPR28) from Saccharomyces cerevisiae (strain ATCC 204508 / S288c) (Baker's yeast).